A 154-amino-acid polypeptide reads, in one-letter code: D-aminoacyl-tRNA deacylase (154 aa).

The short motif at 142–143 (GP) is the Gly-cisPro motif, important for rejection of L-amino acids element.

This sequence belongs to the DTD family. Homodimer.

It is found in the cytoplasm. The catalysed reaction is glycyl-tRNA(Ala) + H2O = tRNA(Ala) + glycine + H(+). The enzyme catalyses a D-aminoacyl-tRNA + H2O = a tRNA + a D-alpha-amino acid + H(+). An aminoacyl-tRNA editing enzyme that deacylates mischarged D-aminoacyl-tRNAs. Also deacylates mischarged glycyl-tRNA(Ala), protecting cells against glycine mischarging by AlaRS. Acts via tRNA-based rather than protein-based catalysis; rejects L-amino acids rather than detecting D-amino acids in the active site. By recycling D-aminoacyl-tRNA to D-amino acids and free tRNA molecules, this enzyme counteracts the toxicity associated with the formation of D-aminoacyl-tRNA entities in vivo and helps enforce protein L-homochirality. In Polaromonas naphthalenivorans (strain CJ2), this protein is D-aminoacyl-tRNA deacylase.